The sequence spans 457 residues: ATP synthase subunit beta (457 aa).

An ATP-binding site is contributed by 147-154; that stretch reads GGAGVGKT.

It belongs to the ATPase alpha/beta chains family. F-type ATPases have 2 components, CF(1) - the catalytic core - and CF(0) - the membrane proton channel. CF(1) has five subunits: alpha(3), beta(3), gamma(1), delta(1), epsilon(1). CF(0) has three main subunits: a(1), b(2) and c(9-12). The alpha and beta chains form an alternating ring which encloses part of the gamma chain. CF(1) is attached to CF(0) by a central stalk formed by the gamma and epsilon chains, while a peripheral stalk is formed by the delta and b chains.

The protein resides in the cell inner membrane. It catalyses the reaction ATP + H2O + 4 H(+)(in) = ADP + phosphate + 5 H(+)(out). Its function is as follows. Produces ATP from ADP in the presence of a proton gradient across the membrane. The catalytic sites are hosted primarily by the beta subunits. The polypeptide is ATP synthase subunit beta (Haemophilus influenzae (strain PittGG)).